The following is a 98-amino-acid chain: Co-chaperonin GroES 4 (98 aa).

It belongs to the GroES chaperonin family. In terms of assembly, heptamer of 7 subunits arranged in a ring. Interacts with the chaperonin GroEL.

Its subcellular location is the cytoplasm. In terms of biological role, together with the chaperonin GroEL, plays an essential role in assisting protein folding. The GroEL-GroES system forms a nano-cage that allows encapsulation of the non-native substrate proteins and provides a physical environment optimized to promote and accelerate protein folding. GroES binds to the apical surface of the GroEL ring, thereby capping the opening of the GroEL channel. The chain is Co-chaperonin GroES 4 from Mesorhizobium japonicum (strain LMG 29417 / CECT 9101 / MAFF 303099) (Mesorhizobium loti (strain MAFF 303099)).